The following is a 215-amino-acid chain: Deoxyribose-phosphate aldolase (215 aa).

The Proton donor/acceptor role is filled by Asp-89. Lys-153 serves as the catalytic Schiff-base intermediate with acetaldehyde. Residue Lys-182 is the Proton donor/acceptor of the active site.

Belongs to the DeoC/FbaB aldolase family. DeoC type 1 subfamily.

It is found in the cytoplasm. The enzyme catalyses 2-deoxy-D-ribose 5-phosphate = D-glyceraldehyde 3-phosphate + acetaldehyde. The protein operates within carbohydrate degradation; 2-deoxy-D-ribose 1-phosphate degradation; D-glyceraldehyde 3-phosphate and acetaldehyde from 2-deoxy-alpha-D-ribose 1-phosphate: step 2/2. In terms of biological role, catalyzes a reversible aldol reaction between acetaldehyde and D-glyceraldehyde 3-phosphate to generate 2-deoxy-D-ribose 5-phosphate. The polypeptide is Deoxyribose-phosphate aldolase (Lactiplantibacillus plantarum (strain ATCC BAA-793 / NCIMB 8826 / WCFS1) (Lactobacillus plantarum)).